A 274-amino-acid polypeptide reads, in one-letter code: Cell division protein FtsQ (274 aa).

The tract at residues 1–24 (MRDLHAKKQRVPHNRVKKPPKERK) is disordered. The Cytoplasmic segment spans residues 1–33 (MRDLHAKKQRVPHNRVKKPPKERKPINWGPILK). Residues 7–21 (KKQRVPHNRVKKPPK) are compositionally biased toward basic residues. The helical transmembrane segment at 34-56 (FASRGFGGAALCAGLGFGGWQLY) threads the bilayer. The Periplasmic portion of the chain corresponds to 57-274 (NLVSRTTLLR…YADKIIVKKV (218 aa)). Residues 65-133 (LRLEAIEVSP…HTLSITVSER (69 aa)) enclose the POTRA domain.

It belongs to the FtsQ/DivIB family. FtsQ subfamily.

Its subcellular location is the cell inner membrane. In terms of biological role, essential cell division protein. This Geobacter sp. (strain M21) protein is Cell division protein FtsQ.